A 170-amino-acid polypeptide reads, in one-letter code: uncharacterized protein (170 aa).

In terms of domain architecture, Ferritin-like diiron spans 1–148; the sequence is MVKSQKVIDV…TIHDFFENAT (148 aa).

This is an uncharacterized protein from Ureaplasma parvum serovar 3 (strain ATCC 700970).